The primary structure comprises 257 residues: Neurotrophin-3 (257 aa).

Residues 1–18 (MSILFYMIFLAYLRGIQG) form the signal peptide. The propeptide occupies 19 to 138 (NSMDQRRLPE…VANRTARRKR (120 aa)). The segment at 61 to 81 (STLPKAEAPREPERGEPAKSE) is disordered. Basic and acidic residues predominate over residues 67–79 (EAPREPERGEPAK). Asn-131 carries N-linked (GlcNAc...) asparagine glycosylation. Cystine bridges form between Cys-152-Cys-217, Cys-195-Cys-246, and Cys-205-Cys-248.

The protein belongs to the NGF-beta family.

The protein resides in the secreted. Its function is as follows. Seems to promote the survival of visceral and proprioceptive sensory neurons. This is Neurotrophin-3 (NTF3) from Sus scrofa (Pig).